The primary structure comprises 389 residues: (2R)-sulfolactate sulfo-lyase subunit beta (389 aa).

This sequence belongs to the UxaA family. (2R)-sulfolactate sulfo-lyase is composed of a SuyA and a SuyB subunit.

The protein localises to the cytoplasm. The catalysed reaction is (2R)-3-sulfolactate = sulfite + pyruvate + H(+). Its function is as follows. Together with SuyA, desulfonates sulfolactate to pyruvate and sulfite. This Chromohalobacter salexigens (strain ATCC BAA-138 / DSM 3043 / CIP 106854 / NCIMB 13768 / 1H11) protein is (2R)-sulfolactate sulfo-lyase subunit beta (suyB).